We begin with the raw amino-acid sequence, 149 residues long: Protein Rv2250A (149 aa).

The sequence is that of Protein Rv2250A from Mycobacterium tuberculosis (strain ATCC 25618 / H37Rv).